Reading from the N-terminus, the 530-residue chain is Cytochrome P450 2U1 (530 aa).

A run of 4 helical transmembrane segments spans residues 21–41, 99–119, 247–267, and 328–348; these read LQAV…DWVW, VYGN…LSDF, ICLH…YLPF, and LFYI…NSLL. Cys-476 lines the heme pocket. The helical transmembrane segment at 481-501 threads the bilayer; sequence LAKMELFLMFVSLMQSFTFAL.

It belongs to the cytochrome P450 family. Requires heme as cofactor. In terms of tissue distribution, specifically expressed in thymus and brain. In brain, expressed in cortex, cerebellum, olfactory bulbs, pons and medulla and the limbic structures (at protein level).

The protein localises to the endoplasmic reticulum membrane. The protein resides in the microsome membrane. It is found in the mitochondrion inner membrane. The enzyme catalyses an omega-methyl-long-chain fatty acid + reduced [NADPH--hemoprotein reductase] + O2 = an omega-hydroxy-long-chain fatty acid + oxidized [NADPH--hemoprotein reductase] + H2O + H(+). It catalyses the reaction (5Z,8Z,11Z,14Z)-eicosatetraenoate + reduced [NADPH--hemoprotein reductase] + O2 = 19-hydroxy-(5Z,8Z,11Z,14Z)-eicosatetraenoate + oxidized [NADPH--hemoprotein reductase] + H2O + H(+). It carries out the reaction (5Z,8Z,11Z,14Z)-eicosatetraenoate + reduced [NADPH--hemoprotein reductase] + O2 = 20-hydroxy-(5Z,8Z,11Z,14Z)-eicosatetraenoate + oxidized [NADPH--hemoprotein reductase] + H2O + H(+). The catalysed reaction is N-[(5Z,8Z,11Z,14Z)-eicosatetraenoyl]-serotonin + reduced [NADPH--hemoprotein reductase] + O2 = 2-oxo-N-[(5Z,8Z,11Z,14Z)-eicosatetraenoyl]-serotonin + oxidized [NADPH--hemoprotein reductase] + H2O + H(+). Its function is as follows. A cytochrome P450 monooxygenase involved in the metabolism of arachidonic acid and its conjugates. Mechanistically, uses molecular oxygen inserting one oxygen atom into a substrate, and reducing the second into a water molecule, with two electrons provided by NADPH via cytochrome P450 reductase (CPR; NADPH-ferrihemoprotein reductase). Acts as an omega and omega-1 hydroxylase for arachidonic acid and possibly for other long chain fatty acids. May modulate the arachidonic acid signaling pathway and play a role in other fatty acid signaling processes. May down-regulate the biological activities of N-arachidonoyl-serotonin, an endocannabinoid that has anti-nociceptive effects through inhibition of fatty acid amide hydrolase FAAH, TRPV1 receptor and T-type calcium channels. Catalyzes C-2 oxidation of the indole ring of N-arachidonoyl-serotonin forming a less active product 2-oxo-N-arachidonoyl-serotonin. The sequence is that of Cytochrome P450 2U1 (Cyp2u1) from Rattus norvegicus (Rat).